A 79-amino-acid chain; its full sequence is uncharacterized protein (79 aa).

The protein belongs to the UPF0440 family.

This is an uncharacterized protein from Methanocella arvoryzae (strain DSM 22066 / NBRC 105507 / MRE50).